Reading from the N-terminus, the 301-residue chain is Tyrosine recombinase XerC (301 aa).

A Core-binding (CB) domain is found at 1–85; it reads MELISLFKQY…ALRSFYRFLV (85 aa). The Tyr recombinase domain maps to 106 to 292; sequence KLPHFFYEKE…TKEKLQESYR (187 aa). Residues R147, K171, H244, R247, and H270 contribute to the active site. Y279 functions as the O-(3'-phospho-DNA)-tyrosine intermediate in the catalytic mechanism.

This sequence belongs to the 'phage' integrase family. XerC subfamily. Forms a cyclic heterotetrameric complex composed of two molecules of XerC and two molecules of XerD.

It localises to the cytoplasm. Site-specific tyrosine recombinase, which acts by catalyzing the cutting and rejoining of the recombining DNA molecules. The XerC-XerD complex is essential to convert dimers of the bacterial chromosome into monomers to permit their segregation at cell division. It also contributes to the segregational stability of plasmids. This Pediococcus pentosaceus (strain ATCC 25745 / CCUG 21536 / LMG 10740 / 183-1w) protein is Tyrosine recombinase XerC.